The sequence spans 124 residues: Holo-[acyl-carrier-protein] synthase (124 aa).

2 residues coordinate Mg(2+): Asp-7 and Glu-55.

Belongs to the P-Pant transferase superfamily. AcpS family. Mg(2+) serves as cofactor.

It is found in the cytoplasm. It carries out the reaction apo-[ACP] + CoA = holo-[ACP] + adenosine 3',5'-bisphosphate + H(+). Its function is as follows. Transfers the 4'-phosphopantetheine moiety from coenzyme A to a Ser of acyl-carrier-protein. The polypeptide is Holo-[acyl-carrier-protein] synthase (Borrelia garinii subsp. bavariensis (strain ATCC BAA-2496 / DSM 23469 / PBi) (Borreliella bavariensis)).